Consider the following 260-residue polypeptide: Thiazole synthase (260 aa).

The Schiff-base intermediate with DXP role is filled by Lys96. 1-deoxy-D-xylulose 5-phosphate contacts are provided by residues Gly157, 184 to 185, and 206 to 207; these read AG and NT.

It belongs to the ThiG family. Homotetramer. Forms heterodimers with either ThiH or ThiS.

The protein localises to the cytoplasm. It carries out the reaction [ThiS sulfur-carrier protein]-C-terminal-Gly-aminoethanethioate + 2-iminoacetate + 1-deoxy-D-xylulose 5-phosphate = [ThiS sulfur-carrier protein]-C-terminal Gly-Gly + 2-[(2R,5Z)-2-carboxy-4-methylthiazol-5(2H)-ylidene]ethyl phosphate + 2 H2O + H(+). It participates in cofactor biosynthesis; thiamine diphosphate biosynthesis. Functionally, catalyzes the rearrangement of 1-deoxy-D-xylulose 5-phosphate (DXP) to produce the thiazole phosphate moiety of thiamine. Sulfur is provided by the thiocarboxylate moiety of the carrier protein ThiS. In vitro, sulfur can be provided by H(2)S. The chain is Thiazole synthase from Rhodopseudomonas palustris (strain TIE-1).